Here is a 506-residue protein sequence, read N- to C-terminus: bZIP transcription factor TGA10 (506 aa).

Disordered stretches follow at residues 22 to 50 (VSYM…HQHH) and 113 to 218 (PSSI…KTLR). Polar residues-rich tracts occupy residues 25 to 45 (MDSS…SFGG), 113 to 124 (PSSIQEQRQNSG), 142 to 152 (PSTTNKMNTGL), and 160 to 180 (SKRS…NDAP). Residues 207–216 (DAPKTPDPKT) show a composition bias toward basic and acidic residues. Positions 213–257 (DPKTLRRLAQNREAARKSRLRKKAYVQQLESSRIRLTQLEQELQR) constitute a bZIP domain. Residues 215-235 (KTLRRLAQNREAARKSRLRKK) form a basic motif region. The Nuclear localization signal motif lies at 217 to 224 (LRRLAQNR). The interval 241 to 255 (LESSRIRLTQLEQEL) is leucine-zipper. The 215-residue stretch at 288–502 (AAVFDMEYAR…RALSSLWHAR (215 aa)) folds into the DOG1 domain.

This sequence belongs to the bZIP family. As to quaternary structure, binds DNA as a dimer. Interacts with TGA2.2. As to expression, specifically expressed in roots.

Its subcellular location is the nucleus. Transcription activator that binds to as1-like elements (5'-TGACGTAAgggaTGACGCA-3') in promoters of target genes. Regulates transcription in response to plant signaling molecules salicylic acid (SA), methyl jasmonate (MJ) and auxin (2,4D) only in leaves. Prevents lateral branching and may repress defense signaling. The chain is bZIP transcription factor TGA10 from Nicotiana tabacum (Common tobacco).